We begin with the raw amino-acid sequence, 402 residues long: Shaggy-related protein kinase GSK2 (402 aa).

The interval methionine 1 to asparagine 38 is disordered. The Protein kinase domain maps to tyrosine 63 to phenylalanine 347. Residues valine 69–valine 77 and lysine 92 contribute to the ATP site. Aspartate 188 acts as the Proton acceptor in catalysis.

The protein belongs to the protein kinase superfamily. CMGC Ser/Thr protein kinase family. GSK-3 subfamily. Interacts with DLT. Interacts with OFP8. Interacts with GRF4. Interacts with PUB24. Interacts with SMOS1. Post-translationally, autophosphorylated. In terms of tissue distribution, expressed in lamina joints, vascular tissue and nodes.

It localises to the cytoplasm. Its subcellular location is the nucleus. The catalysed reaction is L-seryl-[protein] + ATP = O-phospho-L-seryl-[protein] + ADP + H(+). The enzyme catalyses L-threonyl-[protein] + ATP = O-phospho-L-threonyl-[protein] + ADP + H(+). Functionally, serine-threonine kinase that acts as a negative regulator of brassinosteroid (BR) signaling. Phosphorylates DLT and BZR1, two positive regulators that mediates several BR responses. Phosphorylation of DLT and BZR1 inhibits their activities in BR signaling. Phosphorylates OFP8, a positive regulator of BR responses. Phosphorylated OFP8 shuttles from the nucleus to the cytoplasm where it is degraded by the proteasome. Phosphorylates the E3 ubiquitin-protein ligase PUB24, a negative regulator of BR signaling, which targets BZR1 and promotes its degradation via the 26S proteasome. Phosphorylation of PUB24 increases its stability. Phosphorylates the AP2-ERF transcription factor SMOS1, a positive regulator of BR signaling, which cooperatively functions in a transactivating complex with BZR1 to enhance the transcription of BR biosynthetic genes. Phosphorylation of SMOS1 leads to its degradation by an unknown mechanism. This chain is Shaggy-related protein kinase GSK2, found in Oryza sativa subsp. japonica (Rice).